A 711-amino-acid chain; its full sequence is Zinc finger protein 175 (711 aa).

The segment covering 1–11 has biased composition (polar residues); it reads MPADVNLSQKP. Residues 1-21 are disordered; it reads MPADVNLSQKPQVLGPEKQDG. The 72-residue stretch at 27–98 folds into the KRAB domain; sequence VSFEDVTVDF…EAEVSHQRCQ (72 aa). The C2H2-type 1; atypical zinc finger occupies 279–301; sequence DGCSECGGSFTQKSHLFAQQRIH. The segment at 307–329 adopts a C2H2-type 2; atypical zinc-finger fold; the sequence is HECGKCGKAFMPQLKLSVYLTDH. The C2H2-type 3 zinc-finger motif lies at 335 to 357; the sequence is CICKECGKVFIQRSELLTHQKTH. Residues 359–362 carry the Nuclear localization signal motif; the sequence is RKKP. 12 consecutive C2H2-type zinc fingers follow at residues 363–385, 391–413, 419–441, 447–469, 475–497, 503–525, 531–553, 559–581, 587–609, 615–637, 643–665, and 671–693; these read YKCH…QRTH, YECS…QKIH, YACS…QRIH, YVCI…QRSH, YQCH…HRIH, HVCS…QRIH, YKCS…QRIH, YVCT…QITH, FVCY…QRTH, YECL…QRIH, and YVCS…QTTH.

It belongs to the krueppel C2H2-type zinc-finger protein family. Ubiquitous.

The protein localises to the cytoplasm. Its subcellular location is the nucleus. Down-regulates the expression of several chemokine receptors. Interferes with HIV-1 replication by suppressing Tat-induced viral LTR promoter activity. The protein is Zinc finger protein 175 (ZNF175) of Homo sapiens (Human).